Here is a 118-residue protein sequence, read N- to C-terminus: Large ribosomal subunit protein bL20 (118 aa).

The protein belongs to the bacterial ribosomal protein bL20 family.

Functionally, binds directly to 23S ribosomal RNA and is necessary for the in vitro assembly process of the 50S ribosomal subunit. It is not involved in the protein synthesizing functions of that subunit. The chain is Large ribosomal subunit protein bL20 from Francisella tularensis subsp. holarctica (strain FTNF002-00 / FTA).